Here is a 247-residue protein sequence, read N- to C-terminus: Large ribosomal subunit protein uL30 (247 aa).

Met-1 bears the N-acetylmethionine mark. A run of 4 repeats spans residues 7-17 (KKKVPAVPETL), 18-29 (KKKRRNFAELKI), 30-41 (KRLRKKFAQKML), and 42-53 (RKARRKLIYEKA). The 4 X 12 AA tandem repeats stretch occupies residues 7–53 (KKKVPAVPETLKKKRRNFAELKIKRLRKKFAQKMLRKARRKLIYEKA). Residue Thr-16 is modified to Phosphothreonine. The residue at position 123 (Lys-123) is an N6-acetyllysine. Lys-126 is subject to N6-succinyllysine. Tyr-138 carries the phosphotyrosine modification.

This sequence belongs to the universal ribosomal protein uL30 family. Component of the large ribosomal subunit. Homodimer. Interacts with DHX33.

It localises to the cytoplasm. Functionally, component of the large ribosomal subunit. The ribosome is a large ribonucleoprotein complex responsible for the synthesis of proteins in the cell. Binds to G-rich structures in 28S rRNA and in mRNAs. Plays a regulatory role in the translation apparatus; inhibits cell-free translation of mRNAs. The chain is Large ribosomal subunit protein uL30 (RPL7) from Pongo abelii (Sumatran orangutan).